We begin with the raw amino-acid sequence, 335 residues long: NADH-quinone oxidoreductase subunit H (335 aa).

The next 8 helical transmembrane spans lie at 11-31 (VIIS…AGAL), 81-101 (VIFT…FAVI), 114-134 (IGLL…LFAG), 154-174 (VSYE…VGSF), 187-207 (LWFI…GVAV), 238-258 (FFVG…TLFF), 270-290 (QLAF…FILL), and 309-329 (FCLP…LLNT).

This sequence belongs to the complex I subunit 1 family. NDH-1 is composed of 13 different subunits. Subunits NuoA, H, J, K, L, M, N constitute the membrane sector of the complex.

The protein localises to the cell inner membrane. The enzyme catalyses a quinone + NADH + 5 H(+)(in) = a quinol + NAD(+) + 4 H(+)(out). Functionally, NDH-1 shuttles electrons from NADH, via FMN and iron-sulfur (Fe-S) centers, to quinones in the respiratory chain. The immediate electron acceptor for the enzyme in this species is believed to be ubiquinone. Couples the redox reaction to proton translocation (for every two electrons transferred, four hydrogen ions are translocated across the cytoplasmic membrane), and thus conserves the redox energy in a proton gradient. This subunit may bind ubiquinone. This is NADH-quinone oxidoreductase subunit H from Pseudomonas fluorescens (strain SBW25).